The chain runs to 769 residues: MDIGKKHVIPKSQYRRKRREFFHNEDREENLNQHQDKQNIDNTTLKKAEKQIHKDSIDKHERFKNSLSSHLEQRNRDVNENKAEESKSNQDSKSAYNRDHYLTDDVSKKQNSLDSVDQDTEKSKYYEQNSEATLSTKSTDKVESSDMRKLSPDKNKVGHEEQHVLSKPSEHDKETRIDFESSRTDSDSSMQTEKIKKDSSDGNESSNLKSEVISDKSNTVPKLSESDDEVNNQKPLTLPEEQKLKRQQSQNEQTKTYTYGDSEQNDKSNHENDLSHHTPSKSDDKDNVMREDHIVDNNPDNDINTPSLSKIDDDRKLDEKIHVEDKHKQNADSSETVGYQSQSSVSHRSTEKRNMAINDHHKLNGQKLNTKTSANNNQKKATSKLNKGRATNNNYSDILKKFWMMYWPKLVILMGIIILIVILNAIFNNVNKNDRMNDNNDADAQKYTTTMKNANNTVKSVVTVENETSKDSSLPKDKASQDEVGSGVVYKKSGDTLYIVTNAHVVGDKENQKITFSNNKSVVGKVLGKDKWSDLAVVKATSSDSSVKEIAIGDSNNLVLGEPILVVGNPLGVDFKGTVTEGIISGLNRNVLIDFDKDNKYDMLMKAFQIDASVNPGNSGGAVVNREGKLIGVVAAKISMPNVENMSFAIPVNEVQKIVKDLETKGKIDYPDVGVKMKNIASLNSFERQAVKLPGKVKNGVVVDQVDNNGLADQSSLKKGDVITELDGKLLEDDLRFRQIIFSHKDDLKSITAKIYRDGKEKEINIKLK.

A compositionally biased stretch (basic residues) spans 1–20 (MDIGKKHVIPKSQYRRKRRE). The interval 1-390 (MDIGKKHVIP…ATSKLNKGRA (390 aa)) is disordered. 2 stretches are compositionally biased toward basic and acidic residues: residues 21–64 (FFHN…ERFK) and 71–108 (LEQR…DVSK). The span at 126–137 (YEQNSEATLSTK) shows a compositional bias: polar residues. The segment covering 138 to 186 (STDKVESSDMRKLSPDKNKVGHEEQHVLSKPSEHDKETRIDFESSRTDS) has biased composition (basic and acidic residues). 2 stretches are compositionally biased toward polar residues: residues 202-221 (GNES…NTVP) and 247-262 (QQSQ…YGDS). Positions 264 to 295 (QNDKSNHENDLSHHTPSKSDDKDNVMREDHIV) are enriched in basic and acidic residues. Residues 298 to 308 (NPDNDINTPSL) show a composition bias toward polar residues. A compositionally biased stretch (basic and acidic residues) spans 310 to 330 (KIDDDRKLDEKIHVEDKHKQN). A compositionally biased stretch (polar residues) spans 331-347 (ADSSETVGYQSQSSVSH). Positions 348-362 (RSTEKRNMAINDHHK) are enriched in basic and acidic residues. Over residues 366-390 (QKLNTKTSANNNQKKATSKLNKGRA) the composition is skewed to polar residues. Residues 410-430 (LVILMGIIILIVILNAIFNNV) form a helical membrane-spanning segment. Active-site charge relay system residues include histidine 504, aspartate 534, and serine 619. Residues 680-733 (IASLNSFERQAVKLPGKVKNGVVVDQVDNNGLADQSSLKKGDVITELDGKLLED) enclose the PDZ domain.

The protein belongs to the peptidase S1C family.

The protein localises to the cell membrane. The polypeptide is Serine protease HtrA-like (Staphylococcus aureus (strain bovine RF122 / ET3-1)).